The primary structure comprises 160 residues: Leucokinin (160 aa).

The signal sequence occupies residues 1 to 19; that stretch reads MAKIVLCMVLLAFGRQVYG. The propeptide occupies 20–130; sequence ASLVPAPISE…RIKSQLQRDE (111 aa). Glycine 147 is subject to Glycine amide. Residues 151 to 160 constitute a propeptide that is removed on maturation; the sequence is SPEPPILPDY.

The protein localises to the secreted. Its function is as follows. Acts through intracellular calcium in Malpighian tubule stellate cells to raise chloride conductance. This Drosophila melanogaster (Fruit fly) protein is Leucokinin (Lk).